An 881-amino-acid chain; its full sequence is Serine/threonine-protein phosphatase BSL1 (881 aa).

Kelch repeat units lie at residues 60-109 (GSSS…AVGT), 269-320 (RLHV…DQDP), and 338-385 (RIYV…PRFS). Disordered regions lie at residues 368-407 (SPLL…LSLD) and 436-464 (AGTL…ANEG). Polar residues-rich tracts occupy residues 374 to 383 (DRTQQSSTPR) and 445 to 460 (TSDA…TDGT). Serine 491 is modified (phosphoserine). Residues 503-522 (VPMNNSDVPQPTKKFTRQKS) are disordered. Positions 584, 586, 618, and 650 each coordinate Mn(2+). Histidine 651 (proton donor) is an active-site residue. The Mn(2+) site is built by histidine 703 and histidine 782. Residues 837-881 (ILSPENSPEHSGDDAWMQELNIQRPPTPTRGRPQPDFDRSSLAYI) form a disordered region. At serine 839 the chain carries Phosphoserine.

Belongs to the PPP phosphatase family. BSU subfamily. In terms of assembly, interacts with CDG1 and CDL1. Requires Mn(2+) as cofactor. Expressed in mature cauline leaves and at the tip of influorescence, including flowers. Expressed at lower level in young tissues relative to older ones.

The protein localises to the nucleus. It carries out the reaction O-phospho-L-seryl-[protein] + H2O = L-seryl-[protein] + phosphate. It catalyses the reaction O-phospho-L-threonyl-[protein] + H2O = L-threonyl-[protein] + phosphate. In terms of biological role, phosphatase involved in elongation process, probably by acting as a regulator of brassinolide signaling. The chain is Serine/threonine-protein phosphatase BSL1 (BSL1) from Arabidopsis thaliana (Mouse-ear cress).